A 70-amino-acid polypeptide reads, in one-letter code: UPF0352 protein Sfri_2492 (70 aa).

This sequence belongs to the UPF0352 family.

The chain is UPF0352 protein Sfri_2492 from Shewanella frigidimarina (strain NCIMB 400).